We begin with the raw amino-acid sequence, 172 residues long: Trypsin inhibitor DE-3 (172 aa).

2 disulfides stabilise this stretch: Cys-39–Cys-83 and Cys-132–Cys-139.

It belongs to the protease inhibitor I3 (leguminous Kunitz-type inhibitor) family.

In terms of biological role, inhibition of trypsin. This is Trypsin inhibitor DE-3 from Erythrina variegata (Indian coral tree).